The sequence spans 57 residues: MAVPFRRTSKAKKRKRRTHVKLQLPGMNECSNCGEYRLSHHVCPECGQYDGKDVANS.

This sequence belongs to the bacterial ribosomal protein bL32 family.

The sequence is that of Large ribosomal subunit protein bL32B (rpmF2) from Listeria innocua serovar 6a (strain ATCC BAA-680 / CLIP 11262).